The sequence spans 89 residues: MYFMTKKMLTFVQTPKEGLSFAMTTYLNLFVKLLIFLYIQNTKACLSINNVNNNSKNKLRSGVSYYIINLKMSMLFTEQIVTIYNKLIF.

Residues 20–39 (SFAMTTYLNLFVKLLIFLYI) traverse the membrane as a helical segment.

It is found in the membrane. This is an uncharacterized protein from Escherichia coli (strain K12).